The following is a 533-amino-acid chain: uncharacterized protein (533 aa).

The next 5 helical transmembrane spans lie at 4-23, 28-47, 57-79, 86-108, and 151-173; these read FLAA…GLAI, VFGL…VVST, IVYQ…PAFF, GWKL…WVLI, and VIGY…AVGA. The RCK C-terminal domain maps to 263-347; that stretch reads LGEERETKIE…VAEVRRFLGD (85 aa). 4 helical membrane passes run 352–374, 379–401, 422–444, and 454–476; these read LADV…GAIP, GGTT…LGAL, LGLA…AALT, and GGLV…VLRL.

The protein belongs to the AAE transporter (TC 2.A.81) family.

The protein resides in the cell membrane. This is an uncharacterized protein from Corynebacterium glutamicum (strain ATCC 13032 / DSM 20300 / JCM 1318 / BCRC 11384 / CCUG 27702 / LMG 3730 / NBRC 12168 / NCIMB 10025 / NRRL B-2784 / 534).